Here is a 259-residue protein sequence, read N- to C-terminus: 4-hydroxy-tetrahydrodipicolinate reductase (259 aa).

NAD(+) is bound by residues 8–13 (GFAGAM), 94–96 (GTT), and 120–123 (APNF). The active-site Proton donor/acceptor is the histidine 150. Histidine 151 serves as a coordination point for (S)-2,3,4,5-tetrahydrodipicolinate. The active-site Proton donor is the lysine 154. Residue 160–161 (GT) participates in (S)-2,3,4,5-tetrahydrodipicolinate binding.

Belongs to the DapB family.

It is found in the cytoplasm. The catalysed reaction is (S)-2,3,4,5-tetrahydrodipicolinate + NAD(+) + H2O = (2S,4S)-4-hydroxy-2,3,4,5-tetrahydrodipicolinate + NADH + H(+). It carries out the reaction (S)-2,3,4,5-tetrahydrodipicolinate + NADP(+) + H2O = (2S,4S)-4-hydroxy-2,3,4,5-tetrahydrodipicolinate + NADPH + H(+). The protein operates within amino-acid biosynthesis; L-lysine biosynthesis via DAP pathway; (S)-tetrahydrodipicolinate from L-aspartate: step 4/4. Its function is as follows. Catalyzes the conversion of 4-hydroxy-tetrahydrodipicolinate (HTPA) to tetrahydrodipicolinate. This Limosilactobacillus fermentum (strain NBRC 3956 / LMG 18251) (Lactobacillus fermentum) protein is 4-hydroxy-tetrahydrodipicolinate reductase.